Consider the following 169-residue polypeptide: Protein-export protein SecB (169 aa).

The protein belongs to the SecB family. As to quaternary structure, homotetramer, a dimer of dimers. One homotetramer interacts with 1 SecA dimer.

Its subcellular location is the cytoplasm. One of the proteins required for the normal export of preproteins out of the cell cytoplasm. It is a molecular chaperone that binds to a subset of precursor proteins, maintaining them in a translocation-competent state. It also specifically binds to its receptor SecA. This is Protein-export protein SecB from Mannheimia succiniciproducens (strain KCTC 0769BP / MBEL55E).